The chain runs to 430 residues: UDP-N-acetylmuramoylalanine--D-glutamate ligase (430 aa).

Position 109–115 (109–115 (GTDGKST)) interacts with ATP.

This sequence belongs to the MurCDEF family.

The protein localises to the cytoplasm. The catalysed reaction is UDP-N-acetyl-alpha-D-muramoyl-L-alanine + D-glutamate + ATP = UDP-N-acetyl-alpha-D-muramoyl-L-alanyl-D-glutamate + ADP + phosphate + H(+). It functions in the pathway cell wall biogenesis; peptidoglycan biosynthesis. Its function is as follows. Cell wall formation. Catalyzes the addition of glutamate to the nucleotide precursor UDP-N-acetylmuramoyl-L-alanine (UMA). This chain is UDP-N-acetylmuramoylalanine--D-glutamate ligase, found in Thermotoga maritima (strain ATCC 43589 / DSM 3109 / JCM 10099 / NBRC 100826 / MSB8).